Consider the following 467-residue polypeptide: Repressible acid phosphatase (467 aa).

The signal sequence occupies residues 1–17 (MFKSVVYSILAASLANA). Residue His-75 is the Nucleophile of the active site. Asn-97, Asn-103, Asn-162, Asn-192, Asn-250, and Asn-315 each carry an N-linked (GlcNAc...) asparagine glycan. Asp-338 (proton donor) is an active-site residue. 6 N-linked (GlcNAc...) asparagine glycosylation sites follow: Asn-356, Asn-390, Asn-439, Asn-445, Asn-456, and Asn-461.

The protein belongs to the histidine acid phosphatase family. Post-translationally, glycosylated during secretion across the membrane.

It localises to the secreted. It carries out the reaction a phosphate monoester + H2O = an alcohol + phosphate. Its function is as follows. Partially mediates extracellular nucleotide derived phosphate hydrolysis along with NPP1 and NPP2. The polypeptide is Repressible acid phosphatase (PHO5) (Saccharomyces cerevisiae (strain ATCC 204508 / S288c) (Baker's yeast)).